We begin with the raw amino-acid sequence, 206 residues long: Dephospho-CoA kinase (206 aa).

Residues 4–200 enclose the DPCK domain; sequence TVALTGGIGS…ASYLKLASQF (197 aa). Residue 12-17 coordinates ATP; it reads GSGKST.

The protein belongs to the CoaE family.

It localises to the cytoplasm. It carries out the reaction 3'-dephospho-CoA + ATP = ADP + CoA + H(+). The protein operates within cofactor biosynthesis; coenzyme A biosynthesis; CoA from (R)-pantothenate: step 5/5. Functionally, catalyzes the phosphorylation of the 3'-hydroxyl group of dephosphocoenzyme A to form coenzyme A. In Salmonella choleraesuis (strain SC-B67), this protein is Dephospho-CoA kinase.